The following is a 438-amino-acid chain: MSITIRKLDSTSAGFGAELRALLAFEASEDAAIEQSVAQILADVKSRGDAAVLEYTNRFDRLSASSIAALELPQDALQTALDSLAPKARAALEAAAARVRAYHEKQKIECGTHSWQYTESDGTVLGQKVTPLDRVGLYVPGGKAAYPSSVLMNAIPARVAGVGEIVMVVPTPDGVKNDLVLAAALLGGVDRVFTIGGAQAVGALAYGTATVPAVDKICGPGNAYVASAKRRVFGTVGIDMIAGPSEILVLCDGTTDPNWVAMDLFSQAEHDELAQSILLCPDGAFLERVEKAIDELLPSMPRQDVIRASLEGRGALIKVRDMAEACRIANDIAPEHLEISALEPQQWGQQIRHAGAIFLGRYTSESLGDYCAGPNHVLPTSRTARFSSPLGVYDFIKRSSLIEVSAEGAQTLGEIASELAYGEGLQAHAKSAEFRMKH.

3 residues coordinate NAD(+): Tyr-138, Gln-199, and Asn-222. 3 residues coordinate substrate: Ser-245, Gln-267, and His-270. Zn(2+) contacts are provided by Gln-267 and His-270. Residues Glu-335 and His-336 each act as proton acceptor in the active site. Substrate-binding residues include His-336, Asp-369, Glu-423, and His-428. Asp-369 provides a ligand contact to Zn(2+). His-428 is a binding site for Zn(2+).

It belongs to the histidinol dehydrogenase family. Zn(2+) is required as a cofactor.

It carries out the reaction L-histidinol + 2 NAD(+) + H2O = L-histidine + 2 NADH + 3 H(+). Its pathway is amino-acid biosynthesis; L-histidine biosynthesis; L-histidine from 5-phospho-alpha-D-ribose 1-diphosphate: step 9/9. Functionally, catalyzes the sequential NAD-dependent oxidations of L-histidinol to L-histidinaldehyde and then to L-histidine. This chain is Histidinol dehydrogenase, found in Burkholderia lata (strain ATCC 17760 / DSM 23089 / LMG 22485 / NCIMB 9086 / R18194 / 383).